The following is a 216-amino-acid chain: Peptide methionine sulfoxide reductase MsrA (216 aa).

Cys54 is a catalytic residue.

It belongs to the MsrA Met sulfoxide reductase family.

The catalysed reaction is L-methionyl-[protein] + [thioredoxin]-disulfide + H2O = L-methionyl-(S)-S-oxide-[protein] + [thioredoxin]-dithiol. It catalyses the reaction [thioredoxin]-disulfide + L-methionine + H2O = L-methionine (S)-S-oxide + [thioredoxin]-dithiol. Has an important function as a repair enzyme for proteins that have been inactivated by oxidation. Catalyzes the reversible oxidation-reduction of methionine sulfoxide in proteins to methionine. The sequence is that of Peptide methionine sulfoxide reductase MsrA from Xylella fastidiosa (strain Temecula1 / ATCC 700964).